Consider the following 135-residue polypeptide: Protein NrdI (135 aa).

The protein belongs to the NrdI family.

In terms of biological role, probably involved in ribonucleotide reductase function. This chain is Protein NrdI, found in Rhizobium johnstonii (strain DSM 114642 / LMG 32736 / 3841) (Rhizobium leguminosarum bv. viciae).